We begin with the raw amino-acid sequence, 248 residues long: Ribosomal RNA small subunit methyltransferase J (248 aa).

S-adenosyl-L-methionine contacts are provided by residues 97–98 (RD), 113–114 (ER), and Asp167.

The protein belongs to the methyltransferase superfamily. RsmJ family.

It localises to the cytoplasm. It catalyses the reaction guanosine(1516) in 16S rRNA + S-adenosyl-L-methionine = N(2)-methylguanosine(1516) in 16S rRNA + S-adenosyl-L-homocysteine + H(+). Its function is as follows. Specifically methylates the guanosine in position 1516 of 16S rRNA. This Aeromonas hydrophila subsp. hydrophila (strain ATCC 7966 / DSM 30187 / BCRC 13018 / CCUG 14551 / JCM 1027 / KCTC 2358 / NCIMB 9240 / NCTC 8049) protein is Ribosomal RNA small subunit methyltransferase J.